We begin with the raw amino-acid sequence, 119 residues long: NADH-quinone oxidoreductase subunit A (119 aa).

Helical transmembrane passes span 9–29 (VLLF…LGYV), 63–83 (LVAI…PWAV), and 88–108 (VGVT…VGFA).

It belongs to the complex I subunit 3 family. As to quaternary structure, NDH-1 is composed of 14 different subunits. Subunits NuoA, H, J, K, L, M, N constitute the membrane sector of the complex.

It localises to the cell inner membrane. It carries out the reaction a quinone + NADH + 5 H(+)(in) = a quinol + NAD(+) + 4 H(+)(out). Its function is as follows. NDH-1 shuttles electrons from NADH, via FMN and iron-sulfur (Fe-S) centers, to quinones in the respiratory chain. The immediate electron acceptor for the enzyme in this species is believed to be ubiquinone. Couples the redox reaction to proton translocation (for every two electrons transferred, four hydrogen ions are translocated across the cytoplasmic membrane), and thus conserves the redox energy in a proton gradient. This is NADH-quinone oxidoreductase subunit A from Acidovorax sp. (strain JS42).